The following is a 683-amino-acid chain: THO complex subunit 5 homolog (683 aa).

Residues 1–42 (MSSESSKKRKPKVIRSDGTPTEGKRNRSDTEQEGKYYSEEAE) form a disordered region. Ser2 carries the post-translational modification N-acetylserine. Positions 2-144 (SSESSKKRKP…YEVMHLQKEI (143 aa)) are interaction with CSF1R. The tract at residues 2 to 199 (SSESSKKRKP…RLDWELEQRK (198 aa)) is interaction with THOC7. Ser5 and Ser6 each carry phosphoserine. A Nuclear localization signal motif is present at residues 7-10 (KKRK). The segment covering 22 to 42 (EGKRNRSDTEQEGKYYSEEAE) has biased composition (basic and acidic residues). Residues 81 to 247 (AIEIEERRIQ…QASLPVQEYL (167 aa)) are a coiled coil. A Glycyl lysine isopeptide (Lys-Gly) (interchain with G-Cter in SUMO2) cross-link involves residue Lys153. Tyr225 carries the post-translational modification Phosphotyrosine. The tract at residues 247-683 (LFMPFDQAHK…NHPQGFFSHR (437 aa)) is tandem RWD domains. A disordered region spans residues 301 to 336 (FKPPEDSQDDESDSDAEEEQTTKRRRPTLGVQLDDK). Over residues 306–319 (DSQDDESDSDAEEE) the composition is skewed to acidic residues. Ser307, Ser312, and Ser314 each carry phosphoserine. The residue at position 328 (Thr328) is a Phosphothreonine.

This sequence belongs to the THOC5 family. Component of the THO subcomplex, which is composed of THOC1, THOC2, THOC3, THOC5, THOC6 and THOC7. The THO subcomplex interacts with DDX39B to form the THO-DDX39B complex which multimerizes into a 28-subunit tetrameric assembly. Component of the transcription/export (TREX) complex at least composed of ALYREF/THOC4, DDX39B, SARNP/CIP29, CHTOP and the THO subcomplex; in the complex interacts with THOC1, THOC2, THOC5, THOC6 and THOC7; forms a coiled-coil dimer with THOC7; together with THOC6 and THOC7, plays a key structural role in the oligomerization of the THO-DDX39B complex. TREX seems to have a dynamic structure involving ATP-dependent remodeling. Interacts (via N-terminus) with the NTF2 domain of NXF1. Interacts with phosphorylated CSF1R. Forms a complex with CEBPB. Interacts with CPSF6; indicative for an association with the cleavage factor Im (CFIm) complex. Interacts with THOC1. Interacts with LUZP4. Interacts with NCBP3. Phosphorylated on tyrosine upon binding to activated CSF1R; which causes a dissociation of the two proteins. Phosphorylation on Ser-5 and/or Ser-6 is required for nuclear export. Phosphorylated on Thr-328 in insulin-stimulated adipocytes. Ubiquitously expressed, with highest levels in testis, liver and heart.

It localises to the nucleus. The protein resides in the cytoplasm. Its function is as follows. Component of the THO subcomplex of the TREX complex which is thought to couple mRNA transcription, processing and nuclear export, and which specifically associates with spliced mRNA and not with unspliced pre-mRNA. Plays a key structural role in the oligomerization of the THO-DDX39B complex. TREX is recruited to spliced mRNAs by a transcription-independent mechanism, binds to mRNA upstream of the exon-junction complex (EJC) and is recruited in a splicing- and cap-dependent manner to a region near the 5' end of the mRNA where it functions in mRNA export to the cytoplasm via the TAP/NXF1 pathway. THOC5 in conjunction with ALYREF/THOC4 functions in NXF1-NXT1 mediated nuclear export of HSP70 mRNA; both proteins enhance the RNA binding activity of NXF1 and are required for NXF1 localization to the nuclear rim. Involved in transcription elongation and genome stability. Involved in alternative polyadenylation site choice by recruiting CPSF6 to 5' region of target genes; probably mediates association of the TREX and CFIm complexes. In terms of biological role, regulates the expression of myeloid transcription factors CEBPA, CEBPB and GAB2 by enhancing the levels of phosphatidylinositol 3,4,5-trisphosphate. May be involved in the differentiation of granulocytes and adipocytes. Essential for hematopoietic primitive cell survival and plays an integral role in monocytic development. This Mus musculus (Mouse) protein is THO complex subunit 5 homolog (Thoc5).